A 325-amino-acid polypeptide reads, in one-letter code: Lipoyl synthase (325 aa).

Cysteine 72, cysteine 77, cysteine 83, cysteine 98, cysteine 102, cysteine 105, and serine 312 together coordinate [4Fe-4S] cluster. The Radical SAM core domain maps to 84-301 (FSSGTATFMI…AEEGMKMGFK (218 aa)).

Belongs to the radical SAM superfamily. Lipoyl synthase family. [4Fe-4S] cluster is required as a cofactor.

The protein resides in the cytoplasm. It carries out the reaction [[Fe-S] cluster scaffold protein carrying a second [4Fe-4S](2+) cluster] + N(6)-octanoyl-L-lysyl-[protein] + 2 oxidized [2Fe-2S]-[ferredoxin] + 2 S-adenosyl-L-methionine + 4 H(+) = [[Fe-S] cluster scaffold protein] + N(6)-[(R)-dihydrolipoyl]-L-lysyl-[protein] + 4 Fe(3+) + 2 hydrogen sulfide + 2 5'-deoxyadenosine + 2 L-methionine + 2 reduced [2Fe-2S]-[ferredoxin]. It participates in protein modification; protein lipoylation via endogenous pathway; protein N(6)-(lipoyl)lysine from octanoyl-[acyl-carrier-protein]: step 2/2. Catalyzes the radical-mediated insertion of two sulfur atoms into the C-6 and C-8 positions of the octanoyl moiety bound to the lipoyl domains of lipoate-dependent enzymes, thereby converting the octanoylated domains into lipoylated derivatives. The polypeptide is Lipoyl synthase (Stutzerimonas stutzeri (strain A1501) (Pseudomonas stutzeri)).